The sequence spans 515 residues: Probable cytosol aminopeptidase (515 aa).

Residues Lys-279 and Asp-284 each contribute to the Mn(2+) site. Lys-291 is a catalytic residue. Residues Asp-302, Asp-361, and Glu-363 each coordinate Mn(2+). Residue Arg-365 is part of the active site.

This sequence belongs to the peptidase M17 family. Mn(2+) is required as a cofactor.

Its subcellular location is the cytoplasm. The enzyme catalyses Release of an N-terminal amino acid, Xaa-|-Yaa-, in which Xaa is preferably Leu, but may be other amino acids including Pro although not Arg or Lys, and Yaa may be Pro. Amino acid amides and methyl esters are also readily hydrolyzed, but rates on arylamides are exceedingly low.. It carries out the reaction Release of an N-terminal amino acid, preferentially leucine, but not glutamic or aspartic acids.. Functionally, presumably involved in the processing and regular turnover of intracellular proteins. Catalyzes the removal of unsubstituted N-terminal amino acids from various peptides. The sequence is that of Probable cytosol aminopeptidase from Mycobacterium bovis (strain ATCC BAA-935 / AF2122/97).